The following is a 235-amino-acid chain: MKLPMIDQLEKLTGHYFKDKKKLKKALTHSSVQGSEQGNYERLEFLGDRVLGLLIAEMLYQLFPQASEGELSVRLNSLVNAQTCADIALEMELPVMIHVGFEMKNLKGRRLTNMYADVIEALIAVIYLDGGLESVRPFIQRYWQSRAKQMDAGRRDAKTQLQEWAHVQGGVQPHYRVVKRSGPDHDPVFMVEVSIPGFASEIGQGNSKRCAERMAAEKILRREGIWETMEKNNHE.

Positions 6–131 (IDQLEKLTGH…LIAVIYLDGG (126 aa)) constitute an RNase III domain. Residue Glu-44 participates in Mg(2+) binding. Asp-48 is a catalytic residue. Mg(2+)-binding residues include Asp-117 and Glu-120. Glu-120 is an active-site residue. A DRBM domain is found at 156-225 (DAKTQLQEWA…AEKILRREGI (70 aa)).

This sequence belongs to the ribonuclease III family. Homodimer. The cofactor is Mg(2+).

Its subcellular location is the cytoplasm. It carries out the reaction Endonucleolytic cleavage to 5'-phosphomonoester.. Digests double-stranded RNA. Involved in the processing of primary rRNA transcript to yield the immediate precursors to the large and small rRNAs (23S and 16S). Processes some mRNAs, and tRNAs when they are encoded in the rRNA operon. Processes pre-crRNA and tracrRNA of type II CRISPR loci if present in the organism. This chain is Ribonuclease 3, found in Bartonella henselae (strain ATCC 49882 / DSM 28221 / CCUG 30454 / Houston 1) (Rochalimaea henselae).